Reading from the N-terminus, the 155-residue chain is Large-conductance mechanosensitive channel (155 aa).

The next 2 helical transmembrane spans lie at Val25–Leu45 and Gly98–Val118.

This sequence belongs to the MscL family. Homopentamer.

The protein resides in the cell inner membrane. Its function is as follows. Channel that opens in response to stretch forces in the membrane lipid bilayer. May participate in the regulation of osmotic pressure changes within the cell. This Novosphingobium aromaticivorans (strain ATCC 700278 / DSM 12444 / CCUG 56034 / CIP 105152 / NBRC 16084 / F199) protein is Large-conductance mechanosensitive channel.